Reading from the N-terminus, the 174-residue chain is Large ribosomal subunit protein uL10 (174 aa).

This sequence belongs to the universal ribosomal protein uL10 family. In terms of assembly, part of the ribosomal stalk of the 50S ribosomal subunit. The N-terminus interacts with L11 and the large rRNA to form the base of the stalk. The C-terminus forms an elongated spine to which L12 dimers bind in a sequential fashion forming a multimeric L10(L12)X complex.

Forms part of the ribosomal stalk, playing a central role in the interaction of the ribosome with GTP-bound translation factors. This is Large ribosomal subunit protein uL10 from Anaeromyxobacter sp. (strain K).